The sequence spans 262 residues: 5'-nucleotidase SurE (262 aa).

Positions 11, 12, 43, and 101 each coordinate a divalent metal cation.

The protein belongs to the SurE nucleotidase family. The cofactor is a divalent metal cation.

The protein localises to the cytoplasm. The enzyme catalyses a ribonucleoside 5'-phosphate + H2O = a ribonucleoside + phosphate. Functionally, nucleotidase that shows phosphatase activity on nucleoside 5'-monophosphates. The sequence is that of 5'-nucleotidase SurE from Prochlorococcus marinus (strain NATL1A).